Consider the following 327-residue polypeptide: MALVHKLLRDTYILRKFSKPTSALYPFLGIRFAEYSSSLQKPVASPGKASSQRKTEGDLQGDHQKEVALDITSSEEKPDVSFDKAIRDEAMYHFRHLKDEIVDHWRGPEGHSLHEVLLEQAKVVWQFRGKEDLDKWTVTSDKTIGGRSEVFLKMGKNNQSALLYGTLSSEAPQDGESTRSGYCAMKSRIPRGAFERKMSYDWSQFNTLYLRVRGDGRPWMVNIKEDTDFFQRTNQMYSYFMFTRGGPYWQEVKIPFSKFFFSNRGRIRDVQHELPLDKISSIGFTLADKVDGPFFLEIDFIGVFTDPAHTEEFAYENSPELNPRLFK.

The transit peptide at 1-24 (MALVHKLLRDTYILRKFSKPTSAL) directs the protein to the mitochondrion. The tract at residues 42–63 (PVASPGKASSQRKTEGDLQGDH) is disordered. The segment covering 53–63 (RKTEGDLQGDH) has biased composition (basic and acidic residues). At Ser318 the chain carries Phosphoserine.

This sequence belongs to the CIA30 family. Part of the mitochondrial complex I assembly/MCIA complex that comprises at least the core subunits TMEM126B, NDUFAF1, ECSIT and ACAD9 and complement subunits such as COA1 and TMEM186. Interacts with ECSIT. Interacts with ACAD9. At early stages of complex I assembly, it is found in intermediate subcomplexes that contain different subunits including NDUFB6, NDUFA6, NDUFA9, NDUFS3, NDUFS7, ND1, ND2 and ND3. Interacts with TMEM70 and TMEM242.

It localises to the mitochondrion. Its subcellular location is the mitochondrion matrix. Its function is as follows. As part of the MCIA complex, involved in the assembly of the mitochondrial complex I. The polypeptide is Complex I intermediate-associated protein 30, mitochondrial (Gorilla gorilla gorilla (Western lowland gorilla)).